The chain runs to 555 residues: Solute carrier family 22 member 2 (555 aa).

The Cytoplasmic portion of the chain corresponds to 1 to 21; sequence MPTTVDDVLEHGGEFHFFQKQ. Residues 22–42 traverse the membrane as a helical segment; the sequence is MFFLLALLSATFTPIYVGIVF. Topologically, residues 43 to 150 are extracellular; it reads LGFTPDHRCR…LVCANSWMLD (108 aa). N-linked (GlcNAc...) asparagine glycosylation occurs at asparagine 72. The helical transmembrane segment at 151–171 threads the bilayer; that stretch reads LFQASVNVGFFFGSVSIGYIA. At 172-177 the chain is on the cytoplasmic side; it reads DRFGRK. The helical transmembrane segment at 178–198 threads the bilayer; it reads LCLLTTVLINAAAGVLMAISP. Over 199 to 210 the chain is Extracellular; that stretch reads TYTWMLIFRLIQ. The helical transmembrane segment at 211–231 threads the bilayer; the sequence is GLVSKAGWLIGYILITEFVGR. Residues 232–238 lie on the Cytoplasmic side of the membrane; the sequence is RYRRTVG. Residues 239–259 traverse the membrane as a helical segment; that stretch reads IFYQVAYTVGLLVLAGVAYAL. At 260-263 the chain is on the extracellular side; the sequence is PHWR. Residues 264–284 traverse the membrane as a helical segment; that stretch reads WLQFTVTLPNFFFLLYYWCIP. The Proline-rich sequence signature appears at 284–288; that stretch reads PESPR. Topologically, residues 285–348 are cytoplasmic; that stretch reads ESPRWLISQN…VRTPQIRKHT (64 aa). A helical transmembrane segment spans residues 349–369; the sequence is MILMYNWFTSSVLYQGLIMHM. Over 370–375 the chain is Extracellular; it reads GLAGDN. Residues 376-396 traverse the membrane as a helical segment; the sequence is IYLDFFYSALVEFPAAFMIIV. The Cytoplasmic segment spans residues 397–404; that stretch reads TIDRIGRR. The chain crosses the membrane as a helical span at residues 405–425; the sequence is YPWAASNMVAGAACLASVFIP. Over 426–432 the chain is Extracellular; the sequence is GDLQWLK. The helical transmembrane segment at 433–453 threads the bilayer; it reads IIISCLGRMGITMAYEIVRLV. Over 454–464 the chain is Cytoplasmic; the sequence is NAELYPTFIRN. The chain crosses the membrane as a helical span at residues 465 to 485; the sequence is LGVHICSSMCDIGGIITPFLV. At 486-494 the chain is on the extracellular side; it reads YRLTNIWLE. A helical transmembrane segment spans residues 495 to 515; it reads LPLMVFGVLGLVAGGLVLLLP. At 516–555 the chain is on the cytoplasmic side; the sequence is ETKGKALPETIEEAENMQRPRKNKEKMIYLQVQKLDIPLN.

Belongs to the major facilitator (TC 2.A.1) superfamily. Organic cation transporter (TC 2.A.1.19) family. In terms of processing, tyrosine phosphorylated.

It is found in the basolateral cell membrane. It localises to the basal cell membrane. The protein localises to the apical cell membrane. The catalysed reaction is (R)-noradrenaline(out) = (R)-noradrenaline(in). The enzyme catalyses (R)-adrenaline(out) = (R)-adrenaline(in). It catalyses the reaction serotonin(out) = serotonin(in). It carries out the reaction dopamine(out) = dopamine(in). The catalysed reaction is histamine(out) = histamine(in). The enzyme catalyses thiamine(in) = thiamine(out). It catalyses the reaction creatinine(in) = creatinine(out). It carries out the reaction 1-methylnicotinamide(out) = 1-methylnicotinamide(in). The catalysed reaction is guanidine(out) = guanidine(in). The enzyme catalyses choline(out) = choline(in). It catalyses the reaction agmatine(out) = agmatine(in). It carries out the reaction putrescine(out) = putrescine(in). The catalysed reaction is spermidine(in) = spermidine(out). The enzyme catalyses tyramine(in) = tyramine(out). It catalyses the reaction L-histidyl-L-proline diketopiperazine(in) = L-histidyl-L-proline diketopiperazine(out). It carries out the reaction (R)-salsolinol(in) = (R)-salsolinol(out). The catalysed reaction is N-methyl-(R)-salsolinol(in) = N-methyl-(R)-salsolinol(out). The enzyme catalyses acetylcholine(in) = acetylcholine(out). It catalyses the reaction prostaglandin F2alpha(out) = prostaglandin F2alpha(in). It carries out the reaction prostaglandin E2(out) = prostaglandin E2(in). Its activity is regulated as follows. Tyrosine phosphorylation of the transporter leads to activation of the transport activity. Inhibited by cGMP, most likely through a cGMP-binding protein that interacts with OCT2. Electrogenic voltage-dependent transporter that mediates the transport of a variety of organic cations such as endogenous bioactive amines, cationic drugs and xenobiotics. Functions as a Na(+)-independent, bidirectional uniporter. Cation cellular uptake or release is driven by the electrochemical potential, i.e. membrane potential and concentration gradient. However, may also engage electroneutral cation exchange when saturating concentrations of cation substrates are reached. Predominantly expressed at the basolateral membrane of hepatocytes and proximal tubules and involved in the uptake and disposition of cationic compounds by hepatic and renal clearance from the blood flow. Implicated in monoamine neurotransmitters uptake such as histamine, dopamine, adrenaline/epinephrine, noradrenaline/norepinephrine, serotonin and tyramine, thereby supporting a physiological role in the central nervous system by regulating interstitial concentrations of neurotransmitters. Also capable of transporting dopaminergic neuromodulators cyclo(his-pro), salsolinol and N-methyl-salsolinol, thereby involved in the maintenance of dopaminergic cell integrity in the central nervous system. Mediates the bidirectional transport of acetylcholine (ACh) at the apical membrane of ciliated cell in airway epithelium, thereby playing a role in luminal release of ACh from bronchial epithelium. Also transports guanidine and endogenous monoamines such as vitamin B1/thiamine, creatinine and N-1-methylnicotinamide (NMN). Mediates the uptake and efflux of quaternary ammonium compound choline. Mediates the bidirectional transport of polyamine agmatine and the uptake of polyamines putrescine and spermidine. Able to transport non-amine endogenous compounds such as prostaglandin E2 (PGE2) and prostaglandin F2-alpha (PGF2-alpha). Also involved in the uptake of xenobiotic 4-(4-(dimethylamino)styryl)-N-methylpyridinium (ASP). May contribute to regulate the transport of organic compounds in testis across the blood-testis-barrier. The polypeptide is Solute carrier family 22 member 2 (SLC22A2) (Pongo abelii (Sumatran orangutan)).